We begin with the raw amino-acid sequence, 95 residues long: Large ribosomal subunit protein eL37y (95 aa).

Residues Cys19, Cys22, Cys34, and Cys37 each contribute to the Zn(2+) site. A C4-type zinc finger spans residues 19–37; that stretch reads CVRCGRRSFHIQKSRCSAC.

This sequence belongs to the eukaryotic ribosomal protein eL37 family. Zn(2+) serves as cofactor.

Functionally, binds to the 23S rRNA. The protein is Large ribosomal subunit protein eL37y (RPL37B) of Arabidopsis thaliana (Mouse-ear cress).